The sequence spans 167 residues: Endoribonuclease YbeY (167 aa).

His-131, His-135, and His-141 together coordinate Zn(2+).

This sequence belongs to the endoribonuclease YbeY family. The cofactor is Zn(2+).

It is found in the cytoplasm. Its function is as follows. Single strand-specific metallo-endoribonuclease involved in late-stage 70S ribosome quality control and in maturation of the 3' terminus of the 16S rRNA. The sequence is that of Endoribonuclease YbeY from Rickettsia africae (strain ESF-5).